A 333-amino-acid polypeptide reads, in one-letter code: Glycerol-3-phosphate dehydrogenase [NAD(P)+] (333 aa).

NADPH is bound by residues S13, W14, R34, and K108. K108, G137, and S139 together coordinate sn-glycerol 3-phosphate. A141 is a binding site for NADPH. K192, D245, S255, R256, and N257 together coordinate sn-glycerol 3-phosphate. K192 serves as the catalytic Proton acceptor. An NADPH-binding site is contributed by R256. E282 provides a ligand contact to NADPH.

The protein belongs to the NAD-dependent glycerol-3-phosphate dehydrogenase family.

It is found in the cytoplasm. The enzyme catalyses sn-glycerol 3-phosphate + NAD(+) = dihydroxyacetone phosphate + NADH + H(+). The catalysed reaction is sn-glycerol 3-phosphate + NADP(+) = dihydroxyacetone phosphate + NADPH + H(+). The protein operates within membrane lipid metabolism; glycerophospholipid metabolism. In terms of biological role, catalyzes the reduction of the glycolytic intermediate dihydroxyacetone phosphate (DHAP) to sn-glycerol 3-phosphate (G3P), the key precursor for phospholipid synthesis. The polypeptide is Glycerol-3-phosphate dehydrogenase [NAD(P)+] (Thioalkalivibrio sulfidiphilus (strain HL-EbGR7)).